The primary structure comprises 186 residues: Pyridoxal 5'-phosphate synthase subunit PdxT (186 aa).

46–48 (GES) serves as a coordination point for L-glutamine. Cysteine 78 functions as the Nucleophile in the catalytic mechanism. L-glutamine is bound by residues arginine 105 and 134–135 (IR). Residues histidine 170 and glutamate 172 each act as charge relay system in the active site.

The protein belongs to the glutaminase PdxT/SNO family. In the presence of PdxS, forms a dodecamer of heterodimers. Only shows activity in the heterodimer.

The catalysed reaction is aldehydo-D-ribose 5-phosphate + D-glyceraldehyde 3-phosphate + L-glutamine = pyridoxal 5'-phosphate + L-glutamate + phosphate + 3 H2O + H(+). It carries out the reaction L-glutamine + H2O = L-glutamate + NH4(+). Its pathway is cofactor biosynthesis; pyridoxal 5'-phosphate biosynthesis. Functionally, catalyzes the hydrolysis of glutamine to glutamate and ammonia as part of the biosynthesis of pyridoxal 5'-phosphate. The resulting ammonia molecule is channeled to the active site of PdxS. The polypeptide is Pyridoxal 5'-phosphate synthase subunit PdxT (Clostridium acetobutylicum (strain ATCC 824 / DSM 792 / JCM 1419 / IAM 19013 / LMG 5710 / NBRC 13948 / NRRL B-527 / VKM B-1787 / 2291 / W)).